A 323-amino-acid chain; its full sequence is tRNA dimethylallyltransferase (323 aa).

ATP is bound at residue 12–19; the sequence is GPTAAGKT. Residue 14–19 coordinates substrate; sequence TAAGKT. Interaction with substrate tRNA regions lie at residues 37–40 and 161–165; these read DSAL and QRLIR.

This sequence belongs to the IPP transferase family. As to quaternary structure, monomer. Requires Mg(2+) as cofactor.

The catalysed reaction is adenosine(37) in tRNA + dimethylallyl diphosphate = N(6)-dimethylallyladenosine(37) in tRNA + diphosphate. Functionally, catalyzes the transfer of a dimethylallyl group onto the adenine at position 37 in tRNAs that read codons beginning with uridine, leading to the formation of N6-(dimethylallyl)adenosine (i(6)A). This Pseudomonas syringae pv. tomato (strain ATCC BAA-871 / DC3000) protein is tRNA dimethylallyltransferase.